A 239-amino-acid chain; its full sequence is Nicotinamide riboside transporter PnuC (239 aa).

Topologically, residues 1 to 21 (MDFFSVQNILVHIPIGAGGYD) are cytoplasmic. A helical transmembrane segment spans residues 22-42 (LSWIEAVGTIAGLLCIGLASL). The Periplasmic segment spans residues 43–48 (EKISNY). A helical membrane pass occupies residues 49–68 (FFGLINVTLFGIIFFQIQLY). The Cytoplasmic segment spans residues 69 to 71 (ASL). Residues 72-89 (LLQVFFFAANIYGWYAWS) form a helical membrane-spanning segment. Residues 90-109 (RQTSQNEAELKIRWLPLPKA) lie on the Periplasmic side of the membrane. A helical transmembrane segment spans residues 110–127 (LSWLAVCVVSIGLMTVFI). The Cytoplasmic segment spans residues 128–157 (NPVFAFLTRVAVMIMQALGLQVVMPELQPD). A helical transmembrane segment spans residues 158–177 (AFPFWDSCMMVLSIVAMILM). Over 178 to 183 (TRKYVE) the chain is Periplasmic. Residues 184 to 206 (NWLLWVIINVISVVIFALQGVYA) form a helical membrane-spanning segment. Residues Trp188 and Asn192 each coordinate beta-nicotinamide D-riboside. At 207-239 (MSLEYIILTFIALNGSRMWINSARERGSRALSH) the chain is on the cytoplasmic side.

Belongs to the nicotinamide ribonucleoside (NR) uptake permease (TC 4.B.1) family.

It localises to the cell inner membrane. Its function is as follows. Required for nicotinamide riboside transport across the inner membrane. The chain is Nicotinamide riboside transporter PnuC (pnuC) from Escherichia coli (strain K12).